Here is a 172-residue protein sequence, read N- to C-terminus: Zinc finger protein 580 (172 aa).

The disordered stretch occupies residues 1–93 (MLLLPPRPPH…GEPGPRKGYS (93 aa)). The span at 19–30 (MDPPPPKAPPFP) shows a compositional bias: pro residues. Lysine 31 is covalently cross-linked (Glycyl lysine isopeptide (Lys-Gly) (interchain with G-Cter in SUMO2)). Residues 31–44 (KAEGPSSTPSSAAG) show a composition bias toward low complexity. Residues 75 to 86 (GPPQREAPPGEP) are compositionally biased toward pro residues. A C2H2-type 1 zinc finger spans residues 92 to 114 (YSCPECARVFASPLRLQSHRVSH). Residue lysine 118 forms a Glycyl lysine isopeptide (Lys-Gly) (interchain with G-Cter in SUMO2) linkage. 2 consecutive C2H2-type zinc fingers follow at residues 120-142 (FTCG…RATH) and 150-172 (HTCP…VRLH).

Interacts with SMAD2. As to expression, expressed in endothelial cells.

The protein localises to the nucleus. Functionally, involved in the regulation of endothelial cell proliferation and migration. Mediates H(2)O(2)-induced leukocyte chemotaxis by elevating interleukin-8 production and may play a role in inflammation. May be involved in transcriptional regulation. The protein is Zinc finger protein 580 (ZNF580) of Homo sapiens (Human).